Consider the following 233-residue polypeptide: ATP-dependent Clp protease proteolytic subunit 1 (233 aa).

The active-site Nucleophile is the Ser-136. His-161 is a catalytic residue.

The protein belongs to the peptidase S14 family. Fourteen ClpP subunits assemble into 2 heptameric rings which stack back to back to give a disk-like structure with a central cavity, resembling the structure of eukaryotic proteasomes.

It localises to the cytoplasm. It catalyses the reaction Hydrolysis of proteins to small peptides in the presence of ATP and magnesium. alpha-casein is the usual test substrate. In the absence of ATP, only oligopeptides shorter than five residues are hydrolyzed (such as succinyl-Leu-Tyr-|-NHMec, and Leu-Tyr-Leu-|-Tyr-Trp, in which cleavage of the -Tyr-|-Leu- and -Tyr-|-Trp bonds also occurs).. In terms of biological role, cleaves peptides in various proteins in a process that requires ATP hydrolysis. Has a chymotrypsin-like activity. Plays a major role in the degradation of misfolded proteins. The polypeptide is ATP-dependent Clp protease proteolytic subunit 1 (Bifidobacterium longum (strain NCC 2705)).